The sequence spans 77 residues: Translation initiation factor IF-1, chloroplastic (77 aa).

In terms of domain architecture, S1-like spans 1–71 (MKEQKWIHEG…TRGRIIYRLR (71 aa)).

It belongs to the IF-1 family. As to quaternary structure, component of the 30S ribosomal translation pre-initiation complex which assembles on the 30S ribosome in the order IF-2 and IF-3, IF-1 and N-formylmethionyl-tRNA(fMet); mRNA recruitment can occur at any time during PIC assembly.

It localises to the plastid. The protein localises to the chloroplast. One of the essential components for the initiation of protein synthesis. Stabilizes the binding of IF-2 and IF-3 on the 30S subunit to which N-formylmethionyl-tRNA(fMet) subsequently binds. Helps modulate mRNA selection, yielding the 30S pre-initiation complex (PIC). Upon addition of the 50S ribosomal subunit IF-1, IF-2 and IF-3 are released leaving the mature 70S translation initiation complex. The chain is Translation initiation factor IF-1, chloroplastic from Daucus carota (Wild carrot).